The primary structure comprises 470 residues: Alpha-1A adrenergic receptor (470 aa).

Over 1 to 27 (MTPSSVTLNCSNCSHVLAPELNTVKAV) the chain is Extracellular. N-linked (GlcNAc...) asparagine glycosylation is found at asparagine 9 and asparagine 12. The helical transmembrane segment at 28–51 (VLGMVLGIFILFGVIGNILVILSV) threads the bilayer. Over 52 to 64 (VCHRHLQTVTYYF) the chain is Cytoplasmic. The helical transmembrane segment at 65-88 (IVNLAVADLLLSSTVLPFSAIFEI) threads the bilayer. Residues 89 to 99 (LDRWVFGRVFC) lie on the Extracellular side of the membrane. A disulfide bridge links cysteine 99 with cysteine 176. The chain crosses the membrane as a helical span at residues 100–122 (NIWAAVDVLCCTASIMSLCVISV). The Cytoplasmic segment spans residues 123–143 (DRYIGVSYPLRYPAIMTKRRA). A helical membrane pass occupies residues 144–167 (LLAVMLLWVLSVIISIGPLFGWKE). Residues 168–181 (PAPEDETVCKITEE) lie on the Extracellular side of the membrane. A helical transmembrane segment spans residues 182-205 (PGYAIFSAVGSFYLPLAIILAMYC). The Cytoplasmic portion of the chain corresponds to 206–271 (RVYVVAQKES…FSREKKAAKT (66 aa)). The helical transmembrane segment at 272 to 295 (LGIVVGCFVLCWLPFFLVLPIGSI) threads the bilayer. Residues 296–303 (FPAYRPSD) lie on the Extracellular side of the membrane. Residues 304–327 (TVFKITFWLGYFNSCINPIIYLCS) traverse the membrane as a helical segment. Residues 328-470 (NQEFKKAFQS…LSLSEKGESV (143 aa)) lie on the Cytoplasmic side of the membrane. Cysteine 343 carries the S-palmitoyl cysteine lipid modification. Positions 375–416 (GAPCRLSPSSSVALSRTPSSRDSREWRVFSGGPINSGPGPTE) are disordered. A compositionally biased stretch (polar residues) spans 381–392 (SPSSSVALSRTP).

The protein belongs to the G-protein coupled receptor 1 family. Adrenergic receptor subfamily. ADRA1A sub-subfamily.

Its subcellular location is the cell membrane. This alpha-adrenergic receptor mediates its action by association with G proteins that activate a phosphatidylinositol-calcium second messenger system. The sequence is that of Alpha-1A adrenergic receptor (adra1a) from Oryzias latipes (Japanese rice fish).